The following is a 172-amino-acid chain: MKLGIVIFPSKMIQDKANGLRKRYDPHYALVPPHITLKTPFETQDEQLESIVNKLHTIASKTNPFTLHVGKVGSFAPVNNVIYFKVEKTPELTFLNEEMHSGFFTQEREYAFVPHLTIGQGLSDAEHADVLGRLRMKDFYYEQPIDRFHLLYQLENGTWTVHETFRLGKGNN.

The active-site Proton donor is His-34. 2 short sequence motifs (HXTX) span residues His-34 to Leu-37 and His-115 to Ile-118. Catalysis depends on His-115, which acts as the Proton acceptor.

The protein belongs to the 2H phosphoesterase superfamily. YjcG family.

The protein is Putative phosphoesterase BAMEG_3349 of Bacillus anthracis (strain CDC 684 / NRRL 3495).